A 376-amino-acid chain; its full sequence is Erythronate-4-phosphate dehydrogenase (376 aa).

Positions 45 and 67 each coordinate substrate. Asp147 contributes to the NAD(+) binding site. Arg209 is an active-site residue. Asp233 lines the NAD(+) pocket. The active site involves Glu238. His255 acts as the Proton donor in catalysis. An NAD(+)-binding site is contributed by Gly258. Substrate is bound at residue Tyr259.

The protein belongs to the D-isomer specific 2-hydroxyacid dehydrogenase family. PdxB subfamily. Homodimer.

It is found in the cytoplasm. It carries out the reaction 4-phospho-D-erythronate + NAD(+) = (R)-3-hydroxy-2-oxo-4-phosphooxybutanoate + NADH + H(+). The protein operates within cofactor biosynthesis; pyridoxine 5'-phosphate biosynthesis; pyridoxine 5'-phosphate from D-erythrose 4-phosphate: step 2/5. In terms of biological role, catalyzes the oxidation of erythronate-4-phosphate to 3-hydroxy-2-oxo-4-phosphonooxybutanoate. The protein is Erythronate-4-phosphate dehydrogenase of Shewanella sp. (strain MR-7).